The sequence spans 202 residues: Small ribosomal subunit protein uS2 (202 aa).

Belongs to the universal ribosomal protein uS2 family.

This chain is Small ribosomal subunit protein uS2 (rps2), found in Pyrococcus horikoshii (strain ATCC 700860 / DSM 12428 / JCM 9974 / NBRC 100139 / OT-3).